Here is a 275-residue protein sequence, read N- to C-terminus: Bis(5'-nucleosyl)-tetraphosphatase, symmetrical (275 aa).

It belongs to the Ap4A hydrolase family.

The enzyme catalyses P(1),P(4)-bis(5'-adenosyl) tetraphosphate + H2O = 2 ADP + 2 H(+). Hydrolyzes diadenosine 5',5'''-P1,P4-tetraphosphate to yield ADP. This chain is Bis(5'-nucleosyl)-tetraphosphatase, symmetrical, found in Stutzerimonas stutzeri (strain A1501) (Pseudomonas stutzeri).